The following is a 755-amino-acid chain: Polyribonucleotide nucleotidyltransferase (755 aa).

2 residues coordinate Mg(2+): Asp-482 and Asp-488. Residues 549–608 enclose the KH domain; sequence PRMVSFYIDKDKISAAIGAKGKNIRSVCERSNAKIEIGDDGKVSVFAMSSAEAEIAKNMM. One can recognise an S1 motif domain in the interval 618-686; that stretch reads GAIVDVKVVK…KGGCPKLSRR (69 aa). Basic and acidic residues predominate over residues 702 to 714; sequence NEEKKDSSNDRDY. The segment at 702–755 is disordered; that stretch reads NEEKKDSSNDRDYYNSPFNRKSGHRKRPVHSRSSFSNRNNRPKFGNDDSSSSFY. The span at 722–731 shows a compositional bias: basic residues; that stretch reads KSGHRKRPVH.

Belongs to the polyribonucleotide nucleotidyltransferase family. Mg(2+) serves as cofactor.

It is found in the cytoplasm. The enzyme catalyses RNA(n+1) + phosphate = RNA(n) + a ribonucleoside 5'-diphosphate. Functionally, involved in mRNA degradation. Catalyzes the phosphorolysis of single-stranded polyribonucleotides processively in the 3'- to 5'-direction. In Wolbachia sp. subsp. Brugia malayi (strain TRS), this protein is Polyribonucleotide nucleotidyltransferase.